Reading from the N-terminus, the 123-residue chain is Fluoride-specific ion channel FluC (123 aa).

Transmembrane regions (helical) follow at residues 7–27 (LLLI…SGIL), 39–59 (LVNS…FFGF), 67–87 (IFLG…SYET), and 100–120 (FMNV…GFIL). Na(+) contacts are provided by G75 and S78.

Belongs to the fluoride channel Fluc/FEX (TC 1.A.43) family.

The protein localises to the cell membrane. The enzyme catalyses fluoride(in) = fluoride(out). With respect to regulation, na(+) is not transported, but it plays an essential structural role and its presence is essential for fluoride channel function. In terms of biological role, fluoride-specific ion channel. Important for reducing fluoride concentration in the cell, thus reducing its toxicity. The chain is Fluoride-specific ion channel FluC from Pyrococcus abyssi (strain GE5 / Orsay).